We begin with the raw amino-acid sequence, 130 residues long: Small ribosomal subunit protein uS8 (130 aa).

This sequence belongs to the universal ribosomal protein uS8 family. In terms of assembly, part of the 30S ribosomal subunit. Contacts proteins S5 and S12.

One of the primary rRNA binding proteins, it binds directly to 16S rRNA central domain where it helps coordinate assembly of the platform of the 30S subunit. This is Small ribosomal subunit protein uS8 from Phytoplasma australiense.